A 5495-amino-acid chain; its full sequence is Microtubule-associated protein futsch (5495 aa).

Disordered stretches follow at residues 1–97 (MGDQ…DADG), 656–975 (AKAD…LKEE), 988–1074 (RDEM…AEEE), 1086–1111 (ERKA…EQSK), 1128–1167 (KSRT…IGAP), 1185–1204 (SATI…DERI), 1255–1275 (KDAP…SGER), 1306–1358 (HEEA…EPNK), 1402–1840 (NQED…VVES), 1866–2631 (EIGK…PGFV), 2709–2810 (AKTV…KDFA), 2830–4166 (LPTL…DLSL), 4196–4230 (KAES…EASP), 4362–4612 (IIPD…ASQL), 4636–4668 (AQKS…DDSL), 4687–4975 (AFST…QMLA), 5035–5065 (KTVT…ERDQ), 5101–5138 (SYEL…EEHS), 5170–5199 (PSTE…QTWA), and 5328–5350 (GLPS…PKKE). The segment covering 35–48 (AKGAGDGPAQDAAQ) has biased composition (low complexity). Composition is skewed to basic and acidic residues over residues 656–672 (AKAD…HEAD), 696–716 (EPEH…KKVE), and 758–795 (GKAD…EKKS). 2 stretches are compositionally biased toward low complexity: residues 797 to 806 (PTTTPAARAP) and 819 to 831 (PATK…TPAK). Residues 832–843 (SAKEANNRKVLE) show a composition bias toward basic and acidic residues. Over residues 850-888 (RVQATSTVSRRVTSTASERRVQQQAEAKTAATGATQATQ) the composition is skewed to low complexity. Residues 918–931 (KAADLKKTRLDKGG) show a composition bias toward basic and acidic residues. Residues 932-942 (TTDSSLVSTPS) show a composition bias toward polar residues. 2 stretches are compositionally biased toward basic and acidic residues: residues 962–975 (DAEK…LKEE) and 988–1007 (RDEM…REMP). Over residues 1012–1041 (GDGENEPDEEEEYLIIEKEEVEQYTEDSIV) the composition is skewed to acidic residues. Residues 1047–1065 (MTKEEEIQKHQRDSQESEK) are compositionally biased toward basic and acidic residues. Composition is skewed to basic and acidic residues over residues 1128 to 1140 (KSRT…KPAE) and 1148 to 1163 (PEEK…KDDQ). The segment covering 1187 to 1196 (TIESGATTAP) has biased composition (polar residues). Composition is skewed to basic and acidic residues over residues 1306–1319 (HEEA…KDSQ), 1327–1337 (SHKEESAKEEK), 1343–1358 (KENK…EPNK), and 1408–1443 (EQVK…KETS). 2 repeat units span residues 1469 to 1502 (REDT…VPAP) and 1513 to 1539 (LASK…KSKK). The interval 1469–4032 (REDTGSIESP…SPLASKESSR (2564 aa)) is 53 X approximate repeat. Composition is skewed to basic and acidic residues over residues 1546–1555 (PESEAKDKKS), 1571–1663 (SVKD…DEKS), 1679–1696 (SVKD…RESI), 1718–1732 (GIKD…RRDS), and 1748–1779 (SVKD…DEKS). Tandem repeats lie at residues 1622-1649 (KSAL…RESI), 1660-1686 (DEKS…ETEK), 1690-1718 (PSRR…VIDG), 1755-1782 (KSTE…SPLT), 1790-1818 (ESAV…RDVS), 1837-1865 (VVES…FVSL), 1874-1902 (SEVI…IVLP), 1911-1939 (PSRP…SVAE), 1948-1976 (KETS…ESVK), 1985-2013 (TSRP…STTQ), 2022-2050 (DEKS…EKSK), 2059-2087 (AEKS…EKSK), 2096-2124 (AEKS…EKSK), 2133-2161 (AEKS…EKSK), 2170-2198 (AEKS…EKSK), 2215-2243 (KEAS…RESV), and 2262-2292 (ESIK…KEAS). The span at 1804–1815 (ERSQPESVTASR) shows a compositional bias: polar residues. Composition is skewed to basic and acidic residues over residues 1887-1896 (VKPESRRESS), 1904-1942 (HAED…ESDK), 1960-1976 (MKDE…ESVK), 1994-2007 (SAKD…ELSR), 2041-2059 (SVKD…ESVA), 2078-2096 (SIKD…ESVA), 2115-2133 (SIKD…ESVA), 2152-2170 (SIKD…ESVA), 2189-2207 (SIKD…ESVA), 2226-2244 (SIKD…ESVA), 2263-2281 (SIKD…ESVA), 2300-2318 (SIKD…ESVA), 2337-2355 (SIKD…ESAA), 2374-2391 (SVKD…RESM), 2419-2435 (SVKD…RRES), 2466-2482 (SVKD…ESKT), 2560-2588 (IKYD…EDKS), and 2604-2627 (SDHE…DKSR). Repeat unit 20 spans residues 2355-2391 (AEKSPLPSKEASRPASVAESVKDEADKSKEESRRESM). 2 tandem repeats follow at residues 2703–2726 (LAQI…PSAP) and 2761–2787 (WVAE…ASTE). Basic and acidic residues predominate over residues 2764–2780 (ESKDDAAQLKSSVEDLR). S2800 carries the phosphoserine; by GSK3-beta modification. A run of 3 repeats spans residues 2820–2846 (LPLT…DFPQ), 2864–2892 (LSKV…AEER), and 2907–2933 (VEKS…GDIS). Positions 2845–2861 (PQTSTPTSSPTVASVQP) are enriched in low complexity. Basic and acidic residues-rich tracts occupy residues 2889–2914 (AEER…KDAS) and 2942–2954 (GPKD…KESS). The segment covering 2955–2966 (RPPSVSASITGD) has biased composition (polar residues). Tandem repeats lie at residues 2956 to 2987 (PPSV…EHDK), 3006 to 3034 (GKSD…SRRE), 3049 to 3075 (SRPE…KDTS), 3089 to 3117 (EKSE…SQEA), 3131 to 3158 (DEKQ…SPMD), 3200 to 3224 (KSDI…SVVG), 3228 to 3256 (DEKA…APPS), 3265 to 3293 (VLGS…EKSL), 3302 to 3330 (PESE…ESVK), 3339 to 3367 (KEAS…ESLP), 3376 to 3404 (DEKS…EQFP), 3413 to 3441 (PASV…ASRP), 3450 to 3478 (DEAE…ASRP), 3487 to 3515 (DEAD…ASRP), 3524 to 3552 (DEAE…ASRP), 3561 to 3589 (DEAE…ASRP), 3598 to 3626 (DEAE…ASRP), 3635 to 3663 (DEAE…ASRP), 3672 to 3700 (DEAE…ASRP), 3709 to 3737 (DEAE…ASRP), 3746 to 3774 (DDAE…ASRP), 3783 to 3811 (DEAE…ASRP), 3820 to 3848 (DEAE…ASRP), 3867 to 3894 (RRES…SVKD), 3895 to 3921 (EAEK…EASR), 3931 to 3958 (DEAD…EASR), 3968 to 3995 (DETE…EASR), and 4005 to 4032 (DEAE…ESSR). Basic and acidic residues-rich tracts occupy residues 2980–2996 (SVKD…ESIA), 3017–3051 (SQKD…ESRP), 3061–3075 (VPRE…KDTS), 3087–3116 (EDEK…KSQE), 3156–3168 (PMDK…EPSR), 3175–3208 (SIKH…KGEK), and 3226–3248 (IKDE…ESSK). A phosphoserine mark is found at S3067, S3071, and S3075. Over residues 3300–3310 (SRPESEAESLK) the composition is skewed to basic and acidic residues. Over residues 3316–3327 (SQETSRPESVTE) the composition is skewed to polar residues. Composition is skewed to basic and acidic residues over residues 3350–3363 (NAKD…EQRP), 3373–3399 (SIKD…RESV), 3419–3431 (SVKD…KEES), 3448–3465 (VKDE…ESVA), 3484–3502 (SVKD…ESGA), 3521–3539 (SIKD…ESVA), 3558–3576 (SVKD…DSVA), 3599–3613 (EAEK…ESVA), 3632–3650 (SIKD…ESVA), 3669–3687 (SVKD…DSVA), 3710–3724 (EAEK…ESVA), 3743–3761 (SVKD…ESVA), 3780–3798 (SVKD…ESVA), and 3817–3835 (SVKD…ESVA). Residues 3836–3850 (EKSSLASKKASRPAS) are compositionally biased toward low complexity. 8 stretches are compositionally biased toward basic and acidic residues: residues 3854–3872 (SVKD…ESVA), 3891–3909 (SVKD…ESVA), 3928–3946 (SVKD…ESGA), 3965–3983 (SVKD…ESVT), 4002–4020 (SVKD…ESVA), 4039–4066 (SIKD…ESIK), 4086–4095 (SVKDETEKPE), and 4115–4141 (AKDE…KEAS). Composition is skewed to polar residues over residues 4142 to 4152 (RSLSVAETASS) and 4214 to 4223 (QPDTGHTAST). 3 stretches are compositionally biased toward basic and acidic residues: residues 4362-4379 (IIPD…KSTA), 4386-4410 (DKST…KSSP), and 4419-4432 (IEEK…EKAQ). A compositionally biased stretch (low complexity) spans 4443 to 4461 (PESVASQPESVPSPSQSAA). Residues 4462–4481 (SHEHKEVELSESHKAEKSSR) are compositionally biased toward basic and acidic residues. Over residues 4498-4508 (RPASSTSQFST) the composition is skewed to polar residues. Positions 4517 to 4528 (ESLLHSLTTTET) are enriched in low complexity. Positions 4529–4539 (VETKQMEEKSS) are enriched in basic and acidic residues. Residues 4540-4560 (FESVSTSVTKSTVLSSQSTVQ) are compositionally biased toward low complexity. 2 stretches are compositionally biased toward basic and acidic residues: residues 4575–4584 (KVEDSSRRES) and 4639–4650 (SNKEIKDARETK). Low complexity-rich tracts occupy residues 4651 to 4662 (VTSQFTTTTSSA) and 4703 to 4714 (TTASAVSSTSAS). The segment covering 4744-4754 (PEDEEPADDVD) has biased composition (acidic residues). 2 stretches are compositionally biased toward basic and acidic residues: residues 4755–4764 (ERSSVKESRS) and 4788–4798 (LVEEEHEHVEE). Residues 4804-4829 (TSTSKTTTLLQSSEQSSTTTSSTSKT) are compositionally biased toward low complexity. The segment covering 4835–4851 (ESITLTQMDQQTSQSQG) has biased composition (polar residues). The segment covering 4875–4905 (GSAGSVIGAGAGAVAAGGKCESSAASIVSSS) has biased composition (low complexity). Positions 4915–4930 (GKSSPGALTSESQSIP) are enriched in polar residues. S4950 is modified (phosphoserine; by GSK3-beta). A compositionally biased stretch (basic and acidic residues) spans 4955–4970 (VSKDELKSLEMQHHSQ). Residues 5101–5112 (SYELQHSSSGVS) are compositionally biased toward polar residues. Over residues 5185–5196 (SQSSESVESSSQ) the composition is skewed to low complexity.

In terms of assembly, heterodimer of a heavy and a light chain. Interacts with Fmr1. Found in a complex with tubulin and Futsch. In terms of processing, several minor light chains can be created with markedly different pIs. Post-translationally, phosphorylated by SGG/GSK3. Phosphorylated by LRRK2 at the presynapse of neuromuscular junctions, which negatively regulates the activity controlling synaptic differentiation. As to expression, neuronal cells within the PNS and CNS.

It localises to the cytoplasm. It is found in the cytoskeleton. Its function is as follows. During embryogenesis, necessary for dendritic and axonal organization and growth at the neuromuscular junction through the regulation of the synaptic microtubule cytoskeleton. Microtubule hairpin loops are found within a small subset of synaptic boutons at the neuromuscular synapse, these loops are stabilized by futsch. Loop morphology and dynamics suggest that rearrangement of these microtubule-based loops is a critical component of the process of bouton division and for subsequent nerve-terminal growth and branching. Translation is repressed by Fmr1. Together with ringer, required for neuromuscular junction (NMJ) bouton growth by regulating synaptic microtubules. Function with ringer in maintaining microtubule stability and dynamics, is essential for promoting axon regeneration in response to peripheral (PNS) and central nervous system (CNS) injury. In response to axotomy, acts downstream of a stress response cascade involving Xbp1 splicing, to control axon regeneration. This Drosophila melanogaster (Fruit fly) protein is Microtubule-associated protein futsch (futsch).